The sequence spans 286 residues: Pyridoxal kinase PdxY (286 aa).

Residues S9 and 44–45 (TQ) contribute to the substrate site. ATP is bound by residues D111, A143, E148, K181, and 208-211 (RPLV). D223 is a substrate binding site.

This sequence belongs to the pyridoxine kinase family. PdxY subfamily. Homodimer. It depends on Mg(2+) as a cofactor.

It carries out the reaction pyridoxal + ATP = pyridoxal 5'-phosphate + ADP + H(+). It functions in the pathway cofactor metabolism; pyridoxal 5'-phosphate salvage; pyridoxal 5'-phosphate from pyridoxal: step 1/1. In terms of biological role, pyridoxal kinase involved in the salvage pathway of pyridoxal 5'-phosphate (PLP). Catalyzes the phosphorylation of pyridoxal to PLP. This is Pyridoxal kinase PdxY from Salmonella paratyphi A (strain ATCC 9150 / SARB42).